A 318-amino-acid chain; its full sequence is Mediator of RNA polymerase II transcription subunit 30 (318 aa).

Low complexity predominate over residues 1 to 13 (MWKYGQNQGNQGP). Disordered regions lie at residues 1-92 (MWKY…QQQQ) and 120-142 (GGGVVPQQQQQQPQQNMPQQNIP). Positions 14–33 (SSGGGGGGGPNMMPMGGFGM) are enriched in gly residues. 3 stretches are compositionally biased toward low complexity: residues 34-55 (QHGNMQQMHMSPQHQQQQQQMG), 78-92 (PGMSPQHQMQQQQQQ), and 124-142 (VPQQQQQQPQQNMPQQNIP).

It belongs to the Mediator complex subunit 30 family. As to quaternary structure, component of the Mediator complex, which includes at least CDK8, MED4, MED6, MED11, MED14, MED17, MED18, MED20, MED21, MED22, MED27, MED28, MED30 and MED31.

It localises to the nucleus. Its function is as follows. Component of the Mediator complex, a coactivator involved in the regulated transcription of nearly all RNA polymerase II-dependent genes. Mediator functions as a bridge to convey information from gene-specific regulatory proteins to the basal RNA polymerase II transcription machinery. Mediator is recruited to promoters by direct interactions with regulatory proteins and serves as a scaffold for the assembly of a functional preinitiation complex with RNA polymerase II and the general transcription factors. The chain is Mediator of RNA polymerase II transcription subunit 30 (MED30) from Drosophila melanogaster (Fruit fly).